The primary structure comprises 357 residues: 3-isopropylmalate dehydrogenase (357 aa).

75-88 (GPKWDTLPPAERPE) lines the NAD(+) pocket. Substrate-binding residues include Arg-96, Arg-106, Arg-134, and Asp-222. Asp-222, Asp-246, and Asp-250 together coordinate Mg(2+). Residue 279–291 (GSAPDIAGQQKAN) participates in NAD(+) binding.

This sequence belongs to the isocitrate and isopropylmalate dehydrogenases family. LeuB type 1 subfamily. In terms of assembly, homodimer. Mg(2+) is required as a cofactor. Requires Mn(2+) as cofactor.

It localises to the cytoplasm. The catalysed reaction is (2R,3S)-3-isopropylmalate + NAD(+) = 4-methyl-2-oxopentanoate + CO2 + NADH. The protein operates within amino-acid biosynthesis; L-leucine biosynthesis; L-leucine from 3-methyl-2-oxobutanoate: step 3/4. Functionally, catalyzes the oxidation of 3-carboxy-2-hydroxy-4-methylpentanoate (3-isopropylmalate) to 3-carboxy-4-methyl-2-oxopentanoate. The product decarboxylates to 4-methyl-2 oxopentanoate. The polypeptide is 3-isopropylmalate dehydrogenase (Moorella thermoacetica (strain ATCC 39073 / JCM 9320)).